The chain runs to 146 residues: 3-hydroxyacyl-[acyl-carrier-protein] dehydratase FabZ (146 aa).

H47 is a catalytic residue.

Belongs to the thioester dehydratase family. FabZ subfamily.

It is found in the cytoplasm. It catalyses the reaction a (3R)-hydroxyacyl-[ACP] = a (2E)-enoyl-[ACP] + H2O. Involved in unsaturated fatty acids biosynthesis. Catalyzes the dehydration of short chain beta-hydroxyacyl-ACPs and long chain saturated and unsaturated beta-hydroxyacyl-ACPs. In Methylococcus capsulatus (strain ATCC 33009 / NCIMB 11132 / Bath), this protein is 3-hydroxyacyl-[acyl-carrier-protein] dehydratase FabZ.